Consider the following 178-residue polypeptide: Probable chorismate pyruvate-lyase (178 aa).

Positions 67, 105, and 164 each coordinate substrate.

This sequence belongs to the UbiC family.

It is found in the cytoplasm. It catalyses the reaction chorismate = 4-hydroxybenzoate + pyruvate. It participates in cofactor biosynthesis; ubiquinone biosynthesis. Functionally, removes the pyruvyl group from chorismate, with concomitant aromatization of the ring, to provide 4-hydroxybenzoate (4HB) for the ubiquinone pathway. In Methylobacillus flagellatus (strain ATCC 51484 / DSM 6875 / VKM B-1610 / KT), this protein is Probable chorismate pyruvate-lyase.